The primary structure comprises 249 residues: Isoamyl acetate-hydrolyzing esterase 1 homolog (249 aa).

The active-site Nucleophile is the Ser-24. An N6-succinyllysine modification is found at Lys-63. Asp-197 functions as the Proton donor in the catalytic mechanism. His-200 (proton acceptor) is an active-site residue.

Belongs to the 'GDSL' lipolytic enzyme family. IAH1 subfamily.

In terms of biological role, probable lipase. This is Isoamyl acetate-hydrolyzing esterase 1 homolog (Iah1) from Mus musculus (Mouse).